We begin with the raw amino-acid sequence, 336 residues long: Holliday junction branch migration complex subunit RuvB (336 aa).

Residues 1 to 184 (MYDEERIVSG…FGIVGHMEYY (184 aa)) are large ATPase domain (RuvB-L). Residues leucine 23, arginine 24, glycine 65, lysine 68, threonine 69, threonine 70, 131–133 (EDY), arginine 174, tyrosine 184, and arginine 221 each bind ATP. A Mg(2+)-binding site is contributed by threonine 69. Residues 185–255 (NEVDLSQIIK…IVQFALDLLR (71 aa)) form a small ATPAse domain (RuvB-S) region. Positions 258–336 (KVGLDRTDRK…HLGIKYNKEG (79 aa)) are head domain (RuvB-H). Residues arginine 313 and arginine 318 each coordinate DNA.

This sequence belongs to the RuvB family. In terms of assembly, homohexamer. Forms an RuvA(8)-RuvB(12)-Holliday junction (HJ) complex. HJ DNA is sandwiched between 2 RuvA tetramers; dsDNA enters through RuvA and exits via RuvB. An RuvB hexamer assembles on each DNA strand where it exits the tetramer. Each RuvB hexamer is contacted by two RuvA subunits (via domain III) on 2 adjacent RuvB subunits; this complex drives branch migration. In the full resolvosome a probable DNA-RuvA(4)-RuvB(12)-RuvC(2) complex forms which resolves the HJ.

The protein resides in the cytoplasm. The catalysed reaction is ATP + H2O = ADP + phosphate + H(+). Its function is as follows. The RuvA-RuvB-RuvC complex processes Holliday junction (HJ) DNA during genetic recombination and DNA repair, while the RuvA-RuvB complex plays an important role in the rescue of blocked DNA replication forks via replication fork reversal (RFR). RuvA specifically binds to HJ cruciform DNA, conferring on it an open structure. The RuvB hexamer acts as an ATP-dependent pump, pulling dsDNA into and through the RuvAB complex. RuvB forms 2 homohexamers on either side of HJ DNA bound by 1 or 2 RuvA tetramers; 4 subunits per hexamer contact DNA at a time. Coordinated motions by a converter formed by DNA-disengaged RuvB subunits stimulates ATP hydrolysis and nucleotide exchange. Immobilization of the converter enables RuvB to convert the ATP-contained energy into a lever motion, pulling 2 nucleotides of DNA out of the RuvA tetramer per ATP hydrolyzed, thus driving DNA branch migration. The RuvB motors rotate together with the DNA substrate, which together with the progressing nucleotide cycle form the mechanistic basis for DNA recombination by continuous HJ branch migration. Branch migration allows RuvC to scan DNA until it finds its consensus sequence, where it cleaves and resolves cruciform DNA. The polypeptide is Holliday junction branch migration complex subunit RuvB (Ligilactobacillus salivarius (strain UCC118) (Lactobacillus salivarius)).